The primary structure comprises 269 residues: Tryptophan synthase alpha chain (269 aa).

Active-site proton acceptor residues include Glu49 and Asp60.

It belongs to the TrpA family. In terms of assembly, tetramer of two alpha and two beta chains.

The enzyme catalyses (1S,2R)-1-C-(indol-3-yl)glycerol 3-phosphate + L-serine = D-glyceraldehyde 3-phosphate + L-tryptophan + H2O. The protein operates within amino-acid biosynthesis; L-tryptophan biosynthesis; L-tryptophan from chorismate: step 5/5. Its function is as follows. The alpha subunit is responsible for the aldol cleavage of indoleglycerol phosphate to indole and glyceraldehyde 3-phosphate. The sequence is that of Tryptophan synthase alpha chain from Actinobacillus succinogenes (strain ATCC 55618 / DSM 22257 / CCUG 43843 / 130Z).